The primary structure comprises 76 residues: MRFYIGLMAALMLTSVLRTDSASVGQTGTKSELAVIERVIRQRDAADVKPVARQNEGPGRDPAPCCQHPIETCCRR.

The first 22 residues, 1 to 22, serve as a signal peptide directing secretion; that stretch reads MRFYIGLMAALMLTSVLRTDSA. Residues 23 to 42 constitute a propeptide that is removed on maturation; that stretch reads SVGQTGTKSELAVIERVIRQ. A 4-hydroxyproline modification is found at Pro50. Pro58, Pro62, and Pro64 each carry 4-hydroxyproline; partial.

This sequence belongs to the conotoxin T superfamily. In terms of processing, contains 2 disulfide bonds that can be either 'C1-C3, C2-C4' or 'C1-C4, C2-C3', since these disulfide connectivities have been observed for conotoxins with cysteine framework V (for examples, see AC P0DQQ7 and AC P81755). As to expression, expressed by the venom duct.

It is found in the secreted. Functionally, probable neurotoxin with unknown target. Possibly targets ion channels. The chain is Conotoxin Cal5a L3 from Californiconus californicus (California cone).